We begin with the raw amino-acid sequence, 403 residues long: Tubby-like F-box protein 6 (403 aa).

An F-box domain is found at 50-105 (SCWAQLPPELLREVLVRIEESEVWWPSRRDVVACAGVCRSWRGITKEIVRVPEASG).

The protein belongs to the TUB family. Ubiquitous.

The polypeptide is Tubby-like F-box protein 6 (TULP6) (Oryza sativa subsp. japonica (Rice)).